The chain runs to 384 residues: Chaperone protein DnaJ (384 aa).

A J domain is found at 4 to 68 (DFYEILGVSR…EKRQMYDQMG (65 aa)). 2 disordered regions span residues 29 to 60 (REYH…DEEK) and 73 to 131 (EQAE…GQDL). A compositionally biased stretch (basic and acidic residues) spans 42–60 (EEKFKQAKKAKEVLTDEEK). The segment covering 80-101 (GAGGGGGRGGMGGDPFGGGAGG) has biased composition (gly residues). Positions 102–111 (FDMQDIFDQF) are enriched in low complexity. Gly residues predominate over residues 112-121 (FGGGGRGGRG). A CR-type zinc finger spans residues 145 to 227 (GATKQLNVTR…CRGNGVVQND (83 aa)). Zn(2+) is bound by residues Cys158, Cys161, Cys175, and Cys178. 4 CXXCXGXG motif repeats span residues 158-165 (CDDCDGAG), 175-182 (CPECNGQG), 201-208 (CRRCDGEG), and 215-222 (CSTCRGNG). The tract at residues 160–191 (DCDGAGHPPGADSETCPECNGQGQTTQVQQTP) is disordered. Low complexity predominate over residues 180–190 (GQGQTTQVQQT). Residues Cys201, Cys204, Cys215, and Cys218 each coordinate Zn(2+).

It belongs to the DnaJ family. In terms of assembly, homodimer. It depends on Zn(2+) as a cofactor.

Its subcellular location is the cytoplasm. In terms of biological role, participates actively in the response to hyperosmotic and heat shock by preventing the aggregation of stress-denatured proteins and by disaggregating proteins, also in an autonomous, DnaK-independent fashion. Unfolded proteins bind initially to DnaJ; upon interaction with the DnaJ-bound protein, DnaK hydrolyzes its bound ATP, resulting in the formation of a stable complex. GrpE releases ADP from DnaK; ATP binding to DnaK triggers the release of the substrate protein, thus completing the reaction cycle. Several rounds of ATP-dependent interactions between DnaJ, DnaK and GrpE are required for fully efficient folding. Also involved, together with DnaK and GrpE, in the DNA replication of plasmids through activation of initiation proteins. In Haloarcula marismortui (strain ATCC 43049 / DSM 3752 / JCM 8966 / VKM B-1809) (Halobacterium marismortui), this protein is Chaperone protein DnaJ.